Reading from the N-terminus, the 126-residue chain is Glycerol dehydrogenase small subunit (126 aa).

Transmembrane regions (helical) follow at residues 13 to 33, 41 to 61, 67 to 87, and 92 to 112; these read WLTL…VIGG, GSTY…FMLM, AFLY…EVGF, and LLPR…TIPV.

It is found in the cell membrane. The enzyme catalyses glycerol + A = dihydroxyacetone + AH2. Catalyzes the oxidation of glycerol to glycerone. Also acts, more slowly, on a number of other polyols including D-sorbitol, D-arabinitol, D-mannitol, meso-erythritol, adonitol and propylene glycol. This is Glycerol dehydrogenase small subunit (sldB) from Gluconobacter thailandicus.